We begin with the raw amino-acid sequence, 702 residues long: MNSLFASTARGLEELLKTELEKLGAVGCQVVQGGVHFQGDTRLIYQSLMWSRLASRIILPMGECKVYSDLDLYLGVQAINWTEIFNPGATFAVHFSGLNDTIRNSQYGAMKVKDAIVDAFTRKNLPRPNVDRESPDLRINVWLNKETASIALDLSGDGLHLRGYRDRTGLAPIKETLAAAIVMRSGWQPGTPLLDPMCGSGTLLIEAAMWATDRAPGLHRGHWGFSGWAQHDETIWQEVKAEAQTRARKGLAEYSSHFYGSDSDARVIERARSNARRAGIGELITFEVKDVAQLSNPLPKGPYGTVISNPPYGERLDSEPALIALHSLLGRTMKNQFGGWNLSLFSASPDLLGSLQLRADKQFKAKNGPLDCVQKNYHIAETTADSKPATVAEDYANRLRKNLKKLEKWARQEGIECYRLYDADLPEYNVAVDRYGDWAVIQEYAPPKTVDAQKARQRLFDIIAATLSVLGIPPNKLVLKTRERQKGKNQYQKMSEKGEFLDVSEYNARLWVNLTDYLDTGLFLDHRIARRMLGEMSKGKDFLNLFSYTGSASVHAGLGGARSTTTVDMSRTYLEWAERNLRLNGLSGRAHRLIQADCLGWLREANEQFDLIFIDPPTFSNSKRMEESFDVQRDHVALMKDLKRLLRKGGTIMFSNNKRGFRMDLEGLAELGLTAQEITQKTLSPDFARNRQIHNCWLIRAA.

The region spanning 43–154 (LIYQSLMWSR…KETASIALDL (112 aa)) is the THUMP domain.

It belongs to the methyltransferase superfamily. RlmKL family.

Its subcellular location is the cytoplasm. It carries out the reaction guanosine(2445) in 23S rRNA + S-adenosyl-L-methionine = N(2)-methylguanosine(2445) in 23S rRNA + S-adenosyl-L-homocysteine + H(+). It catalyses the reaction guanosine(2069) in 23S rRNA + S-adenosyl-L-methionine = N(2)-methylguanosine(2069) in 23S rRNA + S-adenosyl-L-homocysteine + H(+). Functionally, specifically methylates the guanine in position 2445 (m2G2445) and the guanine in position 2069 (m7G2069) of 23S rRNA. This is Ribosomal RNA large subunit methyltransferase K/L from Salmonella gallinarum (strain 287/91 / NCTC 13346).